The following is a 272-amino-acid chain: Secretagogin (272 aa).

EF-hand domains lie at 8-43, 53-89, 101-136, 145-180, 193-228, and 237-272; these read LDAA…MLKK, ERVQ…QEEN, DNSV…LFLQ, KLDE…QENF, ERKR…MMEL, and DLDK…KHKP. 5 residues coordinate Ca(2+): aspartate 21, aspartate 23, asparagine 25, tyrosine 27, and glutamate 32. Ca(2+)-binding residues include aspartate 114, aspartate 116, serine 118, tyrosine 120, glutamate 125, aspartate 158, asparagine 160, aspartate 162, arginine 164, aspartate 169, aspartate 206, serine 208, threonine 210, glutamate 217, aspartate 250, asparagine 252, aspartate 254, lysine 256, and glutamate 261.

The protein resides in the cytoplasm. In Danio rerio (Zebrafish), this protein is Secretagogin (scgn).